Reading from the N-terminus, the 628-residue chain is Inactive sodium-dependent neutral amino acid transporter B(0)AT3 (628 aa).

The Cytoplasmic portion of the chain corresponds to methionine 1–glutamine 26. The chain crosses the membrane as a helical span at residues tyrosine 27–leucine 47. At cysteine 48–tyrosine 51 the chain is on the extracellular side. Residues glycine 52–valine 74 traverse the membrane as a helical segment. The Cytoplasmic portion of the chain corresponds to glutamate 75–glycine 88. A helical transmembrane segment spans residues valine 89–isoleucine 111. The Extracellular portion of the chain corresponds to serine 112 to serine 178. N-linked (GlcNAc...) asparagine glycans are attached at residues asparagine 144, asparagine 168, and asparagine 174. Residues isoleucine 179–glycine 201 form a helical membrane-spanning segment. Residues isoleucine 202–lysine 207 lie on the Cytoplasmic side of the membrane. A helical membrane pass occupies residues valine 208–leucine 230. Over proline 231–valine 253 the chain is Extracellular. Residues tryptophan 254–alanine 276 traverse the membrane as a helical segment. The Cytoplasmic segment spans residues serine 277–aspartate 288. Residues alanine 289–leucine 311 form a helical membrane-spanning segment. The Extracellular segment spans residues glycine 312–alanine 399. Residue asparagine 354 is glycosylated (N-linked (GlcNAc...) asparagine). Residues proline 400–valine 422 form a helical membrane-spanning segment. The Cytoplasmic portion of the chain corresponds to glutamate 423–glutamate 442. A helical transmembrane segment spans residues alanine 443–asparagine 465. The Extracellular portion of the chain corresponds to tyrosine 466 to phenylalanine 474. Residues alanine 475 to methionine 497 traverse the membrane as a helical segment. Residues lysine 498–arginine 517 lie on the Cytoplasmic side of the membrane. Residues leucine 518–tryptophan 540 form a helical membrane-spanning segment. The Extracellular segment spans residues lysine 541–arginine 568. A helical transmembrane segment spans residues alanine 569–leucine 591. The Cytoplasmic portion of the chain corresponds to threonine 592 to arginine 628. Positions aspartate 602 to arginine 628 are disordered.

It belongs to the sodium:neurotransmitter symporter (SNF) (TC 2.A.22) family. SLC6A18 subfamily. In terms of tissue distribution, abundantly expressed in kidney, but not in intestine.

The protein resides in the membrane. Its function is as follows. Does not show neutral amino acid transporter activity. The sequence is that of Inactive sodium-dependent neutral amino acid transporter B(0)AT3 from Homo sapiens (Human).